Here is a 370-residue protein sequence, read N- to C-terminus: DNA replication and repair protein RecF (370 aa).

Residue 30-37 (GENAQGKT) participates in ATP binding.

Belongs to the RecF family.

Its subcellular location is the cytoplasm. Its function is as follows. The RecF protein is involved in DNA metabolism; it is required for DNA replication and normal SOS inducibility. RecF binds preferentially to single-stranded, linear DNA. It also seems to bind ATP. The sequence is that of DNA replication and repair protein RecF from Bacillus velezensis (strain DSM 23117 / BGSC 10A6 / LMG 26770 / FZB42) (Bacillus amyloliquefaciens subsp. plantarum).